We begin with the raw amino-acid sequence, 207 residues long: MTHPDQKPWILGLTGGIGSGKSAAAQCFIDLGIDTVDADHAARWVVEPGRPALEQIATHFGNGVLQASGALDRGALRKLIFENPEQRRWLEALLHPLINQEIVSHLAKAKSPYAILVSPLLIESGQSRMVQRLLVIDVPQQVQIERTMLRDSSSQEQVEAILKVQIQREDRLRHADDVLVNDRDHAWLNSEVERLHHFYLTLRGGQS.

The 198-residue stretch at 10–207 folds into the DPCK domain; it reads ILGLTGGIGS…FYLTLRGGQS (198 aa). ATP is bound at residue 18–23; that stretch reads GSGKSA.

The protein belongs to the CoaE family.

It localises to the cytoplasm. It catalyses the reaction 3'-dephospho-CoA + ATP = ADP + CoA + H(+). Its pathway is cofactor biosynthesis; coenzyme A biosynthesis; CoA from (R)-pantothenate: step 5/5. In terms of biological role, catalyzes the phosphorylation of the 3'-hydroxyl group of dephosphocoenzyme A to form coenzyme A. This Pseudomonas syringae pv. tomato (strain ATCC BAA-871 / DC3000) protein is Dephospho-CoA kinase.